A 520-amino-acid polypeptide reads, in one-letter code: Laccase (520 aa).

The first 21 residues, 1–21, serve as a signal peptide directing secretion; sequence MSRFQSLLAFVVASLAAVAHA. Plastocyanin-like domains are found at residues 23–148 and 160–302; these read IGPT…FVVY and VDND…ILRY. 2 N-linked (GlcNAc...) asparagine glycosylation sites follow: N72 and N75. H85, H87, H130, and H132 together coordinate Cu cation. Disulfide bonds link C106–C509 and C138–C226. N-linked (GlcNAc...) asparagine glycosylation is found at N210, N229, and N354. The Plastocyanin-like 3 domain occupies 369 to 491; sequence TVPVLLQIIS…AGFAVVFAED (123 aa). Cu cation-binding residues include H416, H419, H421, H473, C474, H475, and H479.

This sequence belongs to the multicopper oxidase family. Cu cation serves as cofactor.

Its subcellular location is the secreted. The enzyme catalyses 4 hydroquinone + O2 = 4 benzosemiquinone + 2 H2O. In terms of biological role, lignin degradation and detoxification of lignin-derived products. Has activity towards guaiacol. This chain is Laccase, found in Trametes hirsuta (White-rot fungus).